The primary structure comprises 102 residues: MNKIRKGDRVIVRTGKDKGKQGTVLAVLAEHVTVEGVNVAKKHVRPNPMLGTTGGVVDKIMPIHISNVALVDANGKPSRVGIKVEGGVKTRVLKTTGAAVGA.

It belongs to the universal ribosomal protein uL24 family. In terms of assembly, part of the 50S ribosomal subunit.

In terms of biological role, one of two assembly initiator proteins, it binds directly to the 5'-end of the 23S rRNA, where it nucleates assembly of the 50S subunit. Functionally, one of the proteins that surrounds the polypeptide exit tunnel on the outside of the subunit. This chain is Large ribosomal subunit protein uL24, found in Ralstonia pickettii (strain 12J).